The chain runs to 548 residues: Probable thiamine biosynthetic bifunctional enzyme, chloroplastic (548 aa).

Residues 1–10 (MAAAPQQSVH) show a composition bias toward polar residues. A disordered region spans residues 1 to 40 (MAAAPQQSVHPSLPSSTSTLRLLISSSPRRPPPPPPRARR). The N-terminal 47 residues, 1-47 (MAAAPQQSVHPSLPSSTSTLRLLISSSPRRPPPPPPRARRYNRLAAS), are a transit peptide targeting the chloroplast. Residues 11–28 (PSLPSSTSTLRLLISSSP) are compositionally biased toward low complexity. Residues 372 to 376 (QLREK) and Asn-404 each bind 4-amino-2-methyl-5-(diphosphooxymethyl)pyrimidine. The Mg(2+) site is built by Asp-405 and Asp-424. Ser-443 is a binding site for 4-amino-2-methyl-5-(diphosphooxymethyl)pyrimidine. 469 to 471 (TST) is a binding site for 2-[(2R,5Z)-2-carboxy-4-methylthiazol-5(2H)-ylidene]ethyl phosphate. Lys-472 serves as a coordination point for 4-amino-2-methyl-5-(diphosphooxymethyl)pyrimidine. Residues Gly-499 and 522–523 (VS) each bind 2-[(2R,5Z)-2-carboxy-4-methylthiazol-5(2H)-ylidene]ethyl phosphate.

The protein belongs to the thiamine-phosphate synthase family. Mg(2+) serves as cofactor.

Its subcellular location is the plastid. The protein resides in the chloroplast. The catalysed reaction is 2-[(2R,5Z)-2-carboxy-4-methylthiazol-5(2H)-ylidene]ethyl phosphate + 4-amino-2-methyl-5-(diphosphooxymethyl)pyrimidine + 2 H(+) = thiamine phosphate + CO2 + diphosphate. It catalyses the reaction 2-(2-carboxy-4-methylthiazol-5-yl)ethyl phosphate + 4-amino-2-methyl-5-(diphosphooxymethyl)pyrimidine + 2 H(+) = thiamine phosphate + CO2 + diphosphate. The enzyme catalyses 4-methyl-5-(2-phosphooxyethyl)-thiazole + 4-amino-2-methyl-5-(diphosphooxymethyl)pyrimidine + H(+) = thiamine phosphate + diphosphate. It carries out the reaction 4-amino-5-hydroxymethyl-2-methylpyrimidine + ATP = 4-amino-2-methyl-5-(phosphooxymethyl)pyrimidine + ADP + H(+). It participates in cofactor biosynthesis; thiamine diphosphate biosynthesis; thiamine phosphate from 4-amino-2-methyl-5-diphosphomethylpyrimidine and 4-methyl-5-(2-phosphoethyl)-thiazole: step 1/1. It functions in the pathway cofactor biosynthesis; thiamine diphosphate biosynthesis; 4-amino-2-methyl-5-diphosphomethylpyrimidine from 5-amino-1-(5-phospho-D-ribosyl)imidazole: step 2/3. Its function is as follows. Essential for thiamine biosynthesis. Bifunctional enzyme that catalyzes the phosphorylation of hydroxymethylpyrimidine phosphate (HMP-P) to HMP-PP and condenses 4-methyl-5-(beta-hydroxyethyl)thiazole monophosphate (THZ-P) and 2-methyl-4-amino-5-hydroxymethyl pyrimidine pyrophosphate (HMP-PP) to form thiamine monophosphate (TMP). The polypeptide is Probable thiamine biosynthetic bifunctional enzyme, chloroplastic (Oryza sativa subsp. japonica (Rice)).